Reading from the N-terminus, the 126-residue chain is Small ribosomal subunit protein uS13 (126 aa).

Residues 92 to 126 (RMGLPVRGQRTRTNARTRRGGRRTVAGKKKAPAKK) are disordered. Positions 100–126 (QRTRTNARTRRGGRRTVAGKKKAPAKK) are enriched in basic residues.

Belongs to the universal ribosomal protein uS13 family. As to quaternary structure, part of the 30S ribosomal subunit. Forms a loose heterodimer with protein S19. Forms two bridges to the 50S subunit in the 70S ribosome.

Located at the top of the head of the 30S subunit, it contacts several helices of the 16S rRNA. In the 70S ribosome it contacts the 23S rRNA (bridge B1a) and protein L5 of the 50S subunit (bridge B1b), connecting the 2 subunits; these bridges are implicated in subunit movement. Contacts the tRNAs in the A and P-sites. The polypeptide is Small ribosomal subunit protein uS13 (Cyanothece sp. (strain PCC 7425 / ATCC 29141)).